A 769-amino-acid polypeptide reads, in one-letter code: Amino-acid acetyltransferase, mitochondrial (769 aa).

Positions Leu-150–Ser-172 are disordered. The segment covering Gln-159–Ser-172 has biased composition (polar residues). The N-acetyltransferase domain occupies Met-590–Pro-759.

It belongs to the acetyltransferase family.

It localises to the mitochondrion. The catalysed reaction is L-glutamate + acetyl-CoA = N-acetyl-L-glutamate + CoA + H(+). The protein operates within amino-acid biosynthesis; L-arginine biosynthesis; N(2)-acetyl-L-ornithine from L-glutamate: step 1/4. Functionally, N-acetylglutamate synthase involved in arginine biosynthesis. The chain is Amino-acid acetyltransferase, mitochondrial (arg2) from Penicillium rubens (strain ATCC 28089 / DSM 1075 / NRRL 1951 / Wisconsin 54-1255) (Penicillium chrysogenum).